Reading from the N-terminus, the 483-residue chain is Glutamyl-tRNA(Gln) amidotransferase subunit A (483 aa).

Active-site charge relay system residues include Lys-75 and Ser-150. Ser-174 functions as the Acyl-ester intermediate in the catalytic mechanism.

It belongs to the amidase family. GatA subfamily. Heterotrimer of A, B and C subunits.

It carries out the reaction L-glutamyl-tRNA(Gln) + L-glutamine + ATP + H2O = L-glutaminyl-tRNA(Gln) + L-glutamate + ADP + phosphate + H(+). Its function is as follows. Allows the formation of correctly charged Gln-tRNA(Gln) through the transamidation of misacylated Glu-tRNA(Gln) in organisms which lack glutaminyl-tRNA synthetase. The reaction takes place in the presence of glutamine and ATP through an activated gamma-phospho-Glu-tRNA(Gln). This Gloeothece citriformis (strain PCC 7424) (Cyanothece sp. (strain PCC 7424)) protein is Glutamyl-tRNA(Gln) amidotransferase subunit A.